Reading from the N-terminus, the 375-residue chain is MPSGSGFHNIEEAGEKARKRDDWIAISNFHPGWFSVNMGTGITAILLQNLPYQFPGLHYIAVILFILNVIIFFLFLTISITRYCLWPDKFKAMLAHPAHSMLLGTFPMGFATIINCIVFICVPVWGEWASRFAWGLWWIDAAVSVAICYFVPFMLMTKHTSSLETMTAAWLLPIVAPVVAAASGGVVADSLQNDTHALITILVCYVMWGSAVPLAMVILVIYFQRLAIHKLVPRAAIVSALLPIGPLGQGGFGLMQLGVVAKRVFPRLDFLAPIAGDIFYVMGAFIAMIMWGFGLIWLWFALASFTRGKFYFNIGWWAFTFPLGVFTTATTQMGKEFNSPFFDILGTFFSIVVTCMWVLVFALTVYKSCTKELFR.

The Cytoplasmic portion of the chain corresponds to 1–25; that stretch reads MPSGSGFHNIEEAGEKARKRDDWIA. A helical transmembrane segment spans residues 26 to 46; sequence ISNFHPGWFSVNMGTGITAIL. Residues 47–59 lie on the Extracellular side of the membrane; that stretch reads LQNLPYQFPGLHY. Residues 60 to 80 form a helical membrane-spanning segment; the sequence is IAVILFILNVIIFFLFLTISI. Topologically, residues 81–101 are cytoplasmic; the sequence is TRYCLWPDKFKAMLAHPAHSM. The chain crosses the membrane as a helical span at residues 102-122; it reads LLGTFPMGFATIINCIVFICV. The Extracellular portion of the chain corresponds to 123-135; it reads PVWGEWASRFAWG. Residues 136-156 form a helical membrane-spanning segment; that stretch reads LWWIDAAVSVAICYFVPFMLM. Residues 157-167 lie on the Cytoplasmic side of the membrane; it reads TKHTSSLETMT. Residues 168–188 form a helical membrane-spanning segment; sequence AAWLLPIVAPVVAAASGGVVA. Residues 189-200 are Extracellular-facing; the sequence is DSLQNDTHALIT. The N-linked (GlcNAc...) asparagine glycan is linked to asparagine 193. A helical membrane pass occupies residues 201–221; sequence ILVCYVMWGSAVPLAMVILVI. Topologically, residues 222-234 are cytoplasmic; the sequence is YFQRLAIHKLVPR. Residues 235-255 form a helical membrane-spanning segment; sequence AAIVSALLPIGPLGQGGFGLM. Topologically, residues 256 to 277 are extracellular; sequence QLGVVAKRVFPRLDFLAPIAGD. A helical transmembrane segment spans residues 278–298; that stretch reads IFYVMGAFIAMIMWGFGLIWL. Residues 299–309 are Cytoplasmic-facing; it reads WFALASFTRGK. A helical transmembrane segment spans residues 310–330; sequence FYFNIGWWAFTFPLGVFTTAT. Residues 331–343 are Extracellular-facing; the sequence is TQMGKEFNSPFFD. The chain crosses the membrane as a helical span at residues 344-364; the sequence is ILGTFFSIVVTCMWVLVFALT. Residues 365–375 are Cytoplasmic-facing; the sequence is VYKSCTKELFR.

It belongs to the tellurite-resistance/dicarboxylate transporter (TDT) family.

The protein resides in the cell membrane. Functionally, sulphite efflux pump required for the secretion of sulphite as a reducing agent. In the presence of sulphite, cystine in keratin is directly cleaved to cysteine and S-sulphocysteine, and thereby, reduced proteins become accessible to hydrolysis by a variety of secreted endo- and exoproteases. Excretion of sulphite mediated by an efflux pump also represents a detoxification pathway for dermatophytes during infection of the epidermal stratum corneum, hair and nails, which are rich in cysteine. The polypeptide is Sulfite efflux pump SSU1 (Arthroderma benhamiae (strain ATCC MYA-4681 / CBS 112371) (Trichophyton mentagrophytes)).